The following is a 265-amino-acid chain: DNA-binding dual transcriptional regulator Rns (265 aa).

Positions 20 and 75 each coordinate decanoate. The HTH araC/xylS-type domain maps to 164–261 (DKVRNLIEKD…GVTPKQFFTY (98 aa)). 2 DNA-binding regions (H-T-H motif) span residues 181–202 (GIIA…ESEN) and 228–251 (ISQI…NKHY).

In terms of assembly, homodimer; each subunit binds one decanoate molecule.

The protein localises to the cytoplasm. Its activity is regulated as follows. Rns-dependent expression of pilins and outer membrane proteins CexE-alpha and CexE-epsilon are inhibited in vivo by decanoic acid (decanoate); has no effect on expression of DnaK or flagellins. Decanoate relieves Rns-dependent repression of nlpA. Its function is as follows. A transcription factor required for the expression of the CS1 and CS2 adhesins of enterotoxigenic E.coli. Required for expression of pilins and some outer membrane lipoproteins. Represses expression of nlpA. This Escherichia coli protein is DNA-binding dual transcriptional regulator Rns.